A 366-amino-acid chain; its full sequence is Aminomethyltransferase (366 aa).

The protein belongs to the GcvT family. As to quaternary structure, the glycine cleavage system is composed of four proteins: P, T, L and H.

The catalysed reaction is N(6)-[(R)-S(8)-aminomethyldihydrolipoyl]-L-lysyl-[protein] + (6S)-5,6,7,8-tetrahydrofolate = N(6)-[(R)-dihydrolipoyl]-L-lysyl-[protein] + (6R)-5,10-methylene-5,6,7,8-tetrahydrofolate + NH4(+). The glycine cleavage system catalyzes the degradation of glycine. The chain is Aminomethyltransferase from Bacillus cereus (strain 03BB102).